Here is a 401-residue protein sequence, read N- to C-terminus: L-rhamnonate dehydratase (401 aa).

Substrate is bound by residues histidine 29 and arginine 55. Aspartate 222, glutamate 248, and glutamate 276 together coordinate Mg(2+). The Proton acceptor role is filled by histidine 325. Glutamate 345 serves as a coordination point for substrate.

This sequence belongs to the mandelate racemase/muconate lactonizing enzyme family. RhamD subfamily. In terms of assembly, homooctamer; tetramer of dimers. Mg(2+) serves as cofactor.

It carries out the reaction L-rhamnonate = 2-dehydro-3-deoxy-L-rhamnonate + H2O. Its function is as follows. Catalyzes the dehydration of L-rhamnonate to 2-keto-3-deoxy-L-rhamnonate (KDR). The polypeptide is L-rhamnonate dehydratase (Klebsiella pneumoniae (strain 342)).